Consider the following 183-residue polypeptide: ATP synthase subunit b, chloroplastic (183 aa).

A helical transmembrane segment spans residues 28 to 48; sequence DIFEANVINILLLLFGLIYVL.

This sequence belongs to the ATPase B chain family. As to quaternary structure, F-type ATPases have 2 components, F(1) - the catalytic core - and F(0) - the membrane proton channel. F(1) has five subunits: alpha(3), beta(3), gamma(1), delta(1), epsilon(1). F(0) has four main subunits: a(1), b(1), b'(1) and c(10-14). The alpha and beta chains form an alternating ring which encloses part of the gamma chain. F(1) is attached to F(0) by a central stalk formed by the gamma and epsilon chains, while a peripheral stalk is formed by the delta, b and b' chains.

The protein localises to the plastid. The protein resides in the chloroplast thylakoid membrane. F(1)F(0) ATP synthase produces ATP from ADP in the presence of a proton or sodium gradient. F-type ATPases consist of two structural domains, F(1) containing the extramembraneous catalytic core and F(0) containing the membrane proton channel, linked together by a central stalk and a peripheral stalk. During catalysis, ATP synthesis in the catalytic domain of F(1) is coupled via a rotary mechanism of the central stalk subunits to proton translocation. In terms of biological role, component of the F(0) channel, it forms part of the peripheral stalk, linking F(1) to F(0). The polypeptide is ATP synthase subunit b, chloroplastic (Porphyra purpurea (Red seaweed)).